We begin with the raw amino-acid sequence, 208 residues long: N-(5'-phosphoribosyl)anthranilate isomerase (208 aa).

It belongs to the TrpF family.

The catalysed reaction is N-(5-phospho-beta-D-ribosyl)anthranilate = 1-(2-carboxyphenylamino)-1-deoxy-D-ribulose 5-phosphate. It participates in amino-acid biosynthesis; L-tryptophan biosynthesis; L-tryptophan from chorismate: step 3/5. In Methanococcus maripaludis (strain C5 / ATCC BAA-1333), this protein is N-(5'-phosphoribosyl)anthranilate isomerase.